The primary structure comprises 63 residues: Small ribosomal subunit protein eS31 (63 aa).

Cys-34, Cys-37, Cys-53, and Cys-56 together coordinate Zn(2+). The C4-type zinc-finger motif lies at 34–56 (CPKCGSVMAFHREPVPRWHCGKC).

It belongs to the eukaryotic ribosomal protein eS31 family. As to quaternary structure, part of the 30S ribosomal subunit. It depends on Zn(2+) as a cofactor.

The chain is Small ribosomal subunit protein eS31 from Pyrobaculum neutrophilum (strain DSM 2338 / JCM 9278 / NBRC 100436 / V24Sta) (Thermoproteus neutrophilus).